We begin with the raw amino-acid sequence, 119 residues long: Large ribosomal subunit protein uL18 (119 aa).

Belongs to the universal ribosomal protein uL18 family. In terms of assembly, part of the 50S ribosomal subunit; part of the 5S rRNA/L5/L18/L25 subcomplex. Contacts the 5S and 23S rRNAs.

Its function is as follows. This is one of the proteins that bind and probably mediate the attachment of the 5S RNA into the large ribosomal subunit, where it forms part of the central protuberance. The protein is Large ribosomal subunit protein uL18 of Ruegeria sp. (strain TM1040) (Silicibacter sp.).